The chain runs to 599 residues: Elongation factor 4 (599 aa).

Residues lysine 2–glutamine 184 enclose the tr-type G domain. GTP is bound by residues aspartate 14–threonine 19 and asparagine 131–aspartate 134.

The protein belongs to the TRAFAC class translation factor GTPase superfamily. Classic translation factor GTPase family. LepA subfamily.

The protein resides in the cell inner membrane. The enzyme catalyses GTP + H2O = GDP + phosphate + H(+). Required for accurate and efficient protein synthesis under certain stress conditions. May act as a fidelity factor of the translation reaction, by catalyzing a one-codon backward translocation of tRNAs on improperly translocated ribosomes. Back-translocation proceeds from a post-translocation (POST) complex to a pre-translocation (PRE) complex, thus giving elongation factor G a second chance to translocate the tRNAs correctly. Binds to ribosomes in a GTP-dependent manner. The sequence is that of Elongation factor 4 from Salmonella paratyphi C (strain RKS4594).